A 111-amino-acid polypeptide reads, in one-letter code: UPF0060 membrane protein XCC2880 (111 aa).

Transmembrane regions (helical) follow at residues 8–28, 34–54, 62–82, and 91–111; these read LLLF…PYLW, SVWL…LLTL, VYAA…WWVD, and LLGA…PRSG.

Belongs to the UPF0060 family.

The protein resides in the cell inner membrane. This chain is UPF0060 membrane protein XCC2880, found in Xanthomonas campestris pv. campestris (strain ATCC 33913 / DSM 3586 / NCPPB 528 / LMG 568 / P 25).